We begin with the raw amino-acid sequence, 474 residues long: tRNA-2-methylthio-N(6)-dimethylallyladenosine synthase (474 aa).

Residues 3–120 (KKLHIKTWGC…LPEMINSVRG (118 aa)) enclose the MTTase N-terminal domain. C12, C49, C83, C157, C161, and C164 together coordinate [4Fe-4S] cluster. The Radical SAM core domain occupies 143–375 (RAEGPTAFVS…QERINQQAMA (233 aa)). A TRAM domain is found at 378-441 (RRMLGTTQRI…PNSLRGKVVR (64 aa)).

The protein belongs to the methylthiotransferase family. MiaB subfamily. In terms of assembly, monomer. It depends on [4Fe-4S] cluster as a cofactor.

Its subcellular location is the cytoplasm. The enzyme catalyses N(6)-dimethylallyladenosine(37) in tRNA + (sulfur carrier)-SH + AH2 + 2 S-adenosyl-L-methionine = 2-methylsulfanyl-N(6)-dimethylallyladenosine(37) in tRNA + (sulfur carrier)-H + 5'-deoxyadenosine + L-methionine + A + S-adenosyl-L-homocysteine + 2 H(+). Its function is as follows. Catalyzes the methylthiolation of N6-(dimethylallyl)adenosine (i(6)A), leading to the formation of 2-methylthio-N6-(dimethylallyl)adenosine (ms(2)i(6)A) at position 37 in tRNAs that read codons beginning with uridine. The sequence is that of tRNA-2-methylthio-N(6)-dimethylallyladenosine synthase from Escherichia coli (strain SE11).